The following is a 123-amino-acid chain: Protein Wnt-3b (123 aa).

The O-palmitoleoyl serine; by PORCN moiety is linked to residue Ser1. The cysteines at positions 89 and 104 are disulfide-linked. An N-linked (GlcNAc...) asparagine glycan is attached at Asn90.

This sequence belongs to the Wnt family. Post-translationally, palmitoleoylation is required for efficient binding to frizzled receptors. Depalmitoleoylation leads to Wnt signaling pathway inhibition.

It is found in the secreted. The protein localises to the extracellular space. It localises to the extracellular matrix. Its function is as follows. Ligand for members of the frizzled family of seven transmembrane receptors. Probable developmental protein. May be a signaling molecule which affects the development of discrete regions of tissues. Is likely to signal over only few cell diameters. In Plethodon jordani (Red-cheeked salamander), this protein is Protein Wnt-3b (WNT-3B).